We begin with the raw amino-acid sequence, 78 residues long: Large ribosomal subunit protein bL28 (78 aa).

Positions 1–20 (MSRVCQVTGKRPAVGNNRSH) are disordered.

This sequence belongs to the bacterial ribosomal protein bL28 family.

This Actinobacillus pleuropneumoniae serotype 7 (strain AP76) protein is Large ribosomal subunit protein bL28.